We begin with the raw amino-acid sequence, 470 residues long: MPSLKTKGAAGKFASLLLVLALSACSRPAPPPETSGELRVGTRNSPATFYIGHDGETAGFEHDLILAFSRAQNWTLSWTEKSRPQALFDMLERREIHLAAAALPQAVVKDRHLISGPILFETPVHVVYRTADRAPRGVAGLAGKKLAFIIGSGHGPMLMRLKRKHPELSWAAVENVWPEELLAQLQAGKYDAVIINGMDFDAMRNFYPGLAVAFDLPYKQKIVWALSPGSSHAFRNALARFVERARSDGTIKRALERYFGHVKRLGSSDILGILQRRPQRLPDLREHFQEAQTLSGIDWRLLAAIGYQESQWNRLATSPTGVRGVMMLTGETADRMGVSDRLNARESILGGARYLALLKDALPARIAEPDRTWLALAAYNQGQGHLEDARRIAQARGGDPNSWADVKEALPYLSRGSYAKVMKYGYARGGEALRFAENIRNYYDILLRLEPEYDPLINLGRGEDGLPPPG.

An N-terminal signal peptide occupies residues 1-24 (MPSLKTKGAAGKFASLLLVLALSA). Residues 25 to 262 (CSRPAPPPET…RALERYFGHV (238 aa)) are non-LT domain. Residues 263-470 (KRLGSSDILG…RGEDGLPPPG (208 aa)) form an LT domain region. Glu-309 is an active-site residue.

In the N-terminal section; belongs to the bacterial solute-binding protein 3 family. It in the C-terminal section; belongs to the transglycosylase Slt family.

The protein localises to the cell outer membrane. The catalysed reaction is Exolytic cleavage of the (1-&gt;4)-beta-glycosidic linkage between N-acetylmuramic acid (MurNAc) and N-acetylglucosamine (GlcNAc) residues in peptidoglycan, from either the reducing or the non-reducing ends of the peptidoglycan chains, with concomitant formation of a 1,6-anhydrobond in the MurNAc residue.. Functionally, murein-degrading enzyme that degrades murein glycan strands and insoluble, high-molecular weight murein sacculi, with the concomitant formation of a 1,6-anhydromuramoyl product. Lytic transglycosylases (LTs) play an integral role in the metabolism of the peptidoglycan (PG) sacculus. Their lytic action creates space within the PG sacculus to allow for its expansion as well as for the insertion of various structures such as secretion systems and flagella. This is Membrane-bound lytic murein transglycosylase F from Thiobacillus denitrificans (strain ATCC 25259 / T1).